Reading from the N-terminus, the 348-residue chain is Sulfate/thiosulfate import ATP-binding protein CysA (348 aa).

Residues 3-233 form the ABC transporter domain; that stretch reads ILIDNISKKF…PATPFVFSLL (231 aa). 35–42 contributes to the ATP binding site; that stretch reads GPSGSGKS.

This sequence belongs to the ABC transporter superfamily. Sulfate/tungstate importer (TC 3.A.1.6) family.

The protein localises to the plastid. It localises to the chloroplast. It carries out the reaction sulfate(out) + ATP + H2O = sulfate(in) + ADP + phosphate + H(+). The enzyme catalyses thiosulfate(out) + ATP + H2O = thiosulfate(in) + ADP + phosphate + H(+). In terms of biological role, part of the ABC transporter complex involved in sulfate/thiosulfate import. Responsible for energy coupling to the transport system. This is Sulfate/thiosulfate import ATP-binding protein CysA from Mesostigma viride (Green alga).